Reading from the N-terminus, the 376-residue chain is Light-dependent chlorophyll f synthase (376 aa).

A disordered region spans residues 1–22; the sequence is MKLESDHVIATSDSSDYTSEPT. Residues 11 to 22 show a composition bias toward polar residues; sequence TSDSSDYTSEPT. Transmembrane regions (helical) follow at residues 51–68, 140–155, 164–178, 219–240, and 298–312; these read YVGW…TAAT, HFLI…EWEL, WISL…ASVS, LHQL…HGSL, and FLAA…SAAL. His-140 serves as a coordination point for a chlorophyll. His-220 is a binding site for a chlorophyll.

It belongs to the reaction center PufL/M/PsbA/D family. As to quaternary structure, homodimer.

It is found in the cellular thylakoid membrane. Its function is as follows. Synthesizes chlorophyll f or chlorophyllide f (Chl f, 2-formyl chlorophyll a), probably by oxidation of chlorophyll a or chlorophyllide a and reduction of plastoquinone. The reaction is probably light-dependent. Chl f absorbs far red light (FRL, 707 nm in 100% methanol), and is synthesized when cells are grown in FRL, where it provides the advantage of extending the spectral range of harvested light in terrestrial cyanobacteria. When ectopically expressed in Synechococcus PCC 7002 (which does not grow in FRL and does not make Chl f) produces Chl f (0.059% of total chlorophyll). This Chlorogloeopsis fritschii (strain PCC 9212) protein is Light-dependent chlorophyll f synthase.